A 452-amino-acid chain; its full sequence is Trigger factor (452 aa).

A PPIase FKBP-type domain is found at 162 to 247 (GDTVTIDYKG…IHEVKSKQLP (86 aa)). The segment at 427–452 (AKAKLEAKEAEEAEDKEEAEDKKENK) is disordered.

It belongs to the FKBP-type PPIase family. Tig subfamily.

It is found in the cytoplasm. The enzyme catalyses [protein]-peptidylproline (omega=180) = [protein]-peptidylproline (omega=0). Functionally, involved in protein export. Acts as a chaperone by maintaining the newly synthesized protein in an open conformation. Functions as a peptidyl-prolyl cis-trans isomerase. The protein is Trigger factor of Lactobacillus helveticus (strain DPC 4571).